Here is a 62-residue protein sequence, read N- to C-terminus: UPF0337 protein XCC0070 (62 aa).

Residues 32–62 form a disordered region; it reads LEGAAEKNIGKVQRKAGELADDVRDATKSTR.

This sequence belongs to the UPF0337 (CsbD) family.

The protein is UPF0337 protein XCC0070 of Xanthomonas campestris pv. campestris (strain ATCC 33913 / DSM 3586 / NCPPB 528 / LMG 568 / P 25).